The following is a 307-amino-acid chain: MEAHKPVLFDEVMEGLAIRPDGIYVDGTFGRGGHSFGILQRLGPNGRLMAMDKDPDAVAVANKALFEDARFSIVHETFANLQKAVRDRGWEGKVNGILLDIGVSSPQLEDAKRGFSFSKDGPLDMRMNPKQSMDAASWINQAAMEDIRRVLWNYGEERFAKRIAQAIVNAREEKPITRTQELSDIVIKAYPQRKIKKHPATRTFQAIRIFINRELDELRECLPQCLETLAVGGRLCVISFHSLEDRLVKRFIQKESRDHLPREIPILAKDIKHRLKPLGSLIRPTEAEIKKNPRARSARLRIVEKLS.

S-adenosyl-L-methionine contacts are provided by residues 32–34 (GGH), Asp-52, Phe-78, Asp-100, and Gln-107.

The protein belongs to the methyltransferase superfamily. RsmH family.

Its subcellular location is the cytoplasm. It carries out the reaction cytidine(1402) in 16S rRNA + S-adenosyl-L-methionine = N(4)-methylcytidine(1402) in 16S rRNA + S-adenosyl-L-homocysteine + H(+). In terms of biological role, specifically methylates the N4 position of cytidine in position 1402 (C1402) of 16S rRNA. This chain is Ribosomal RNA small subunit methyltransferase H, found in Coxiella burnetii (strain Dugway 5J108-111).